The primary structure comprises 179 residues: Ribosome maturation factor RimM (179 aa).

One can recognise a PRC barrel domain in the interval 95 to 174; that stretch reads KDEFFYFDIL…QIFCTQDAFL (80 aa).

Belongs to the RimM family. In terms of assembly, binds ribosomal protein uS19.

The protein localises to the cytoplasm. Functionally, an accessory protein needed during the final step in the assembly of 30S ribosomal subunit, possibly for assembly of the head region. Essential for efficient processing of 16S rRNA. May be needed both before and after RbfA during the maturation of 16S rRNA. It has affinity for free ribosomal 30S subunits but not for 70S ribosomes. The protein is Ribosome maturation factor RimM of Campylobacter jejuni subsp. jejuni serotype O:6 (strain 81116 / NCTC 11828).